Consider the following 521-residue polypeptide: MADTEEGFGLPSTPVDSEAKELQAEAKQDPQLGTTSKAPTSPQAAFTQQGMEGIKVFLHERELWLKFHEVGTEMIITKAGRRMFPSYKVKVTGLNPKTKYILLMDIVPADDHRYKFADNKWSVTGKAEPAMPGRLYVHPDSPATGAHWMRQLVSFQKLKLTNNHLDPFGHIILNSMHKYQPRLHIVKADENNGFGSKNTAFCTHVFPETAFIAVTSYQNHKITQLKIENNPFAKGFRGSDDMELHRMSRMQSKEYPVVPRSTVRQKVSSNHSPFSGETRVLSTSSNLGSQYQCENGVSSTSQDLLPPTNPYPISQEHSQIYHCTKRKDEECSTTEHPYKKPYMETSPAEEDPFYRSSYPQQQGLNTSYRTESAQRQACMYASSAPPTDPVPSLEDISCNTWPSVPSYSSCTVSAMQPMDRLPYQHFSAHFTSGPLMPRLSSVANHTSPQIGDTHSMFQHQTSVSHQPIVRQCGPQTGIQSPPSSLQPAEFLYSHGVPRTLSPHQYHSVHGVGMVPEWSENS.

The tract at residues 1–45 is disordered; the sequence is MADTEEGFGLPSTPVDSEAKELQAEAKQDPQLGTTSKAPTSPQAA. Residues 17–28 show a composition bias toward basic and acidic residues; that stretch reads SEAKELQAEAKQ. The span at 31 to 45 shows a compositional bias: polar residues; the sequence is QLGTTSKAPTSPQAA. A DNA-binding region (T-box) is located at residues 63–238; that stretch reads LWLKFHEVGT…NNPFAKGFRG (176 aa). Disordered regions lie at residues 254–281 and 332–352; these read EYPV…TRVL and STTE…EEDP. Polar residues predominate over residues 262–281; it reads TVRQKVSSNHSPFSGETRVL.

Monomer. Homodimer (via the T-box); binds DNA as homodimer.

It localises to the nucleus. Its subcellular location is the cytoplasm. Its function is as follows. DNA-binding protein that regulates the transcription of several genes and is involved in heart development and limb pattern formation. May bind to the core DNA motif of promoters. This Gallus gallus (Chicken) protein is T-box transcription factor TBX5 (TBX5).